The following is a 208-amino-acid chain: LexA repressor (208 aa).

The segment at residues 30-50 is a DNA-binding region (H-T-H motif); sequence VREICAAVGLSSTSTVHGHLS. Catalysis depends on for autocatalytic cleavage activity residues serine 129 and lysine 167.

Belongs to the peptidase S24 family. In terms of assembly, homodimer.

It catalyses the reaction Hydrolysis of Ala-|-Gly bond in repressor LexA.. Represses a number of genes involved in the response to DNA damage (SOS response), including recA and lexA. In the presence of single-stranded DNA, RecA interacts with LexA causing an autocatalytic cleavage which disrupts the DNA-binding part of LexA, leading to derepression of the SOS regulon and eventually DNA repair. The protein is LexA repressor of Lactobacillus acidophilus (strain ATCC 700396 / NCK56 / N2 / NCFM).